The sequence spans 296 residues: MNDCIGKRLDKLINESQDEVLKRVVGQILEQNGKARISQDWVRRCGDDFNLTAVELALRCLPVAACYASAPVSHFNVGAVAVGQSGAFYFGANQEFSGDAVQQTVHAEQSAVSHAWLAGEVALTDMVVNYTPCGHCRQFMNELNSADRLQIHLPHSRNNRLHSYLPDAFGPKDLNISRVLFDPQPHSFGFTHADPLVQAAADAAEQAYAPYSRALSGVALQVGTQSITGRYAENAAFNPSFLPLQCALNYRRLSGLSDVPVSRIVMAESQGGLSHRSITEQLAHSYLGLEIEYFAL.

2 consecutive CMP/dCMP-type deaminase domains span residues 52-172 and 191-296; these read TAVE…FGPK and THAD…YFAL. Residue 93-95 coordinates substrate; that stretch reads NQE. H106 provides a ligand contact to Zn(2+). The Proton donor role is filled by E108. Zn(2+)-binding residues include C133 and C136.

The protein belongs to the cytidine and deoxycytidylate deaminase family. As to quaternary structure, homodimer. Requires Zn(2+) as cofactor.

The catalysed reaction is cytidine + H2O + H(+) = uridine + NH4(+). It carries out the reaction 2'-deoxycytidine + H2O + H(+) = 2'-deoxyuridine + NH4(+). Functionally, this enzyme scavenges exogenous and endogenous cytidine and 2'-deoxycytidine for UMP synthesis. The polypeptide is Cytidine deaminase (Actinobacillus succinogenes (strain ATCC 55618 / DSM 22257 / CCUG 43843 / 130Z)).